The primary structure comprises 285 residues: Hydroxyacylglutathione hydrolase, mitochondrial (285 aa).

The transit peptide at 1-10 (MKFLLQQIRN) directs the protein to the mitochondrion. Zn(2+)-binding residues include histidine 69, histidine 71, aspartate 73, histidine 74, histidine 131, aspartate 154, and histidine 198.

Zn(2+) is required as a cofactor.

It is found in the mitochondrion matrix. The enzyme catalyses an S-(2-hydroxyacyl)glutathione + H2O = a 2-hydroxy carboxylate + glutathione + H(+). It carries out the reaction (R)-S-lactoylglutathione + H2O = (R)-lactate + glutathione + H(+). Its pathway is secondary metabolite metabolism; methylglyoxal degradation; (R)-lactate from methylglyoxal: step 2/2. Inhibited by various thiol compounds such as glutathione and coenzyme A. In terms of biological role, thiolesterase that catalyzes the hydrolysis of S-D-lactoylglutathione to form glutathione and D-lactic acid. Involved in the metabolism of methylglyoxal, a toxic compound for yeast proliferation, by converting methylglyoxal to lactate via S-D-lactoylglutathione by sequential enzyme reactions catalyzed by glyoxalase I and glyoxalase II. The sequence is that of Hydroxyacylglutathione hydrolase, mitochondrial from Saccharomyces cerevisiae (strain ATCC 204508 / S288c) (Baker's yeast).